The chain runs to 502 residues: Lysine--tRNA ligase (502 aa).

Residues Glu-403 and Glu-410 each coordinate Mg(2+).

Belongs to the class-II aminoacyl-tRNA synthetase family. As to quaternary structure, homodimer. Mg(2+) serves as cofactor.

The protein resides in the cytoplasm. The enzyme catalyses tRNA(Lys) + L-lysine + ATP = L-lysyl-tRNA(Lys) + AMP + diphosphate. This chain is Lysine--tRNA ligase, found in Parasynechococcus marenigrum (strain WH8102).